The sequence spans 515 residues: Adenine DNA glycosylase (515 aa).

Residues 1 to 24 show a composition bias toward basic residues; it reads MKKLQASVRSHKKQPANHKRRRTR. Positions 1 to 38 are disordered; that stretch reads MKKLQASVRSHKKQPANHKRRRTRALSSSQAKPSSLDG. Glu105 functions as the Proton donor/acceptor in the catalytic mechanism. Residues Cys261, Cys268, Cys271, and Cys277 each contribute to the [4Fe-4S] cluster site. The 132-residue stretch at 335 to 466 folds into the Nudix hydrolase domain; it reads PREEYSATCV…AMKKVFRMYE (132 aa). Positions 376–398 match the Nudix box motif; it reads VTLEPSEQHQHKALLQELQRWCG. Residues 468-494 are disordered; sequence HRQGTRKGSKRSQVCPPSSRKKPSLGQ.

It belongs to the Nth/MutY family. The cofactor is [4Fe-4S] cluster. Expressed in heart, lung, liver, intestine, brain and thymus.

Its subcellular location is the nucleus. It is found in the mitochondrion. The catalysed reaction is Hydrolyzes free adenine bases from 7,8-dihydro-8-oxoguanine:adenine mismatched double-stranded DNA, leaving an apurinic site.. In terms of biological role, involved in oxidative DNA damage repair. Initiates repair of A*oxoG to C*G by removing the inappropriately paired adenine base from the DNA backbone. Possesses both adenine and 2-OH-A DNA glycosylase activities. The protein is Adenine DNA glycosylase (Mutyh) of Mus musculus (Mouse).